The primary structure comprises 382 residues: Mannitol-1-phosphate 5-dehydrogenase (382 aa).

3 to 14 contacts NAD(+); that stretch reads ALHFGAGNIGRG.

Belongs to the mannitol dehydrogenase family.

The enzyme catalyses D-mannitol 1-phosphate + NAD(+) = beta-D-fructose 6-phosphate + NADH + H(+). In Pectobacterium atrosepticum (strain SCRI 1043 / ATCC BAA-672) (Erwinia carotovora subsp. atroseptica), this protein is Mannitol-1-phosphate 5-dehydrogenase.